We begin with the raw amino-acid sequence, 778 residues long: Aerobic respiration control sensor protein ArcB (778 aa).

The Cytoplasmic portion of the chain corresponds to 1 to 25 (MKQIRLLAQYYVDLMMKLGLVRFSM). The chain crosses the membrane as a helical span at residues 26–46 (LLALALVVLAIVVQMAVTMVL). At 47–57 (HGQVESIDVIR) the chain is on the periplasmic side. A helical transmembrane segment spans residues 58 to 78 (SIFFGLLITPWAVYFLSVVVE). At 79–778 (QLEESRQRLS…KAWVAKATKK (700 aa)) the chain is on the cytoplasmic side. The PAS domain occupies 153-223 (QSSFLRSFLD…ETDEKVFRHN (71 aa)). In terms of domain architecture, PAC spans 226 to 278 (LTYEQWLDYPDGRKACFEIRKVPYYDRVGKRHGLMGFGRDITERKRYQDALER). A Histidine kinase domain is found at 289–507 (TISHELRTPL…TFTLTIHAPS (219 aa)). Histidine 292 is modified (phosphohistidine; by autocatalysis). In terms of domain architecture, Response regulatory spans 527–643 (NVLLVEDIEL…ALTAMIKKFW (117 aa)). Aspartate 576 is modified (4-aspartylphosphate). In terms of domain architecture, HPt spans 678 to 771 (GPKLITDGLA…RHDVEVLKAW (94 aa)). Phosphohistidine is present on histidine 717.

Activation requires a sequential transfer of a phosphate group from a His in the primary transmitter domain, to an Asp in the receiver domain and to a His in the secondary transmitter domain.

It is found in the cell inner membrane. It catalyses the reaction ATP + protein L-histidine = ADP + protein N-phospho-L-histidine.. In terms of biological role, member of the two-component regulatory system ArcB/ArcA. Sensor-regulator protein for anaerobic repression of the arc modulon. Activates ArcA via a four-step phosphorelay. ArcB can also dephosphorylate ArcA by a reverse phosphorelay involving His-717 and Asp-576. The protein is Aerobic respiration control sensor protein ArcB (arcB) of Escherichia coli (strain K12).